The primary structure comprises 347 residues: Membrane progestin receptor gamma-B (347 aa).

The Cytoplasmic segment spans residues 1-52 (MLSLIKLQRVFNVHQVPKAFHEDGIISGYRHPRSSATECVWSLFQLTNETLN). A helical membrane pass occupies residues 53–73 (VWTHFLPTWYFLWKLMTVLLM). Residues 74 to 81 (EDVWNEAY) are Extracellular-facing. A helical transmembrane segment spans residues 82–102 (TWPLLVFLFSCCVYPLASSCA). Topologically, residues 103-114 (HTFSSMSTRARH) are cytoplasmic. A helical membrane pass occupies residues 115–135 (ICYFFDYGALSFYSLGSAISY). The Extracellular portion of the chain corresponds to 136–138 (SAY). The chain crosses the membrane as a helical span at residues 139–159 (VFPDAWLSSSFHAYYISVAVF). Residues 160-201 (NTVLSTSLACYSRLGLPLLHYSHDIVERFSERQCPRMSKVLR) lie on the Cytoplasmic side of the membrane. A helical membrane pass occupies residues 202–222 (ILAFAYPYLFDNIPLFYRLFV). The Extracellular segment spans residues 223–235 (CVGEGCTDNEANS). The helical transmembrane segment at 236 to 256 (VHVQHTLLAFLTSFLFATHLP) threads the bilayer. At 257 to 314 (ERLAPGRFDYIGHSHQLFHVCAIIGTHFQMKAIEMDMGLRRSQLLASAPAISFNNTIG) the chain is on the cytoplasmic side. Residues 315 to 335 (AALLCVSVSLGIICVYSLPLL) traverse the membrane as a helical segment. The Extracellular segment spans residues 336 to 347 (YSSNPKNTANKE).

The protein belongs to the ADIPOR family.

It localises to the membrane. Functionally, steroid membrane receptor. Binds progesterone. May be involved in oocyte maturation. The sequence is that of Membrane progestin receptor gamma-B from Danio rerio (Zebrafish).